The sequence spans 89 residues: Small ribosomal subunit protein uS14 (89 aa).

This sequence belongs to the universal ribosomal protein uS14 family. As to quaternary structure, part of the 30S ribosomal subunit. Contacts proteins S3 and S10.

In terms of biological role, binds 16S rRNA, required for the assembly of 30S particles and may also be responsible for determining the conformation of the 16S rRNA at the A site. In Chlorobium luteolum (strain DSM 273 / BCRC 81028 / 2530) (Pelodictyon luteolum), this protein is Small ribosomal subunit protein uS14.